Reading from the N-terminus, the 943-residue chain is Isoleucine--tRNA ligase (943 aa).

The 'HIGH' region signature appears at 59-69 (PYANGQIHLGH). Position 577 (Glu-577) interacts with L-isoleucyl-5'-AMP. The short motif at 618–622 (KMSKS) is the 'KMSKS' region element. Lys-621 contacts ATP. Zn(2+) is bound by residues Cys-906, Cys-909, Cys-926, and Cys-929.

The protein belongs to the class-I aminoacyl-tRNA synthetase family. IleS type 1 subfamily. As to quaternary structure, monomer. Zn(2+) serves as cofactor.

The protein resides in the cytoplasm. It carries out the reaction tRNA(Ile) + L-isoleucine + ATP = L-isoleucyl-tRNA(Ile) + AMP + diphosphate. Its function is as follows. Catalyzes the attachment of isoleucine to tRNA(Ile). As IleRS can inadvertently accommodate and process structurally similar amino acids such as valine, to avoid such errors it has two additional distinct tRNA(Ile)-dependent editing activities. One activity is designated as 'pretransfer' editing and involves the hydrolysis of activated Val-AMP. The other activity is designated 'posttransfer' editing and involves deacylation of mischarged Val-tRNA(Ile). This is Isoleucine--tRNA ligase from Xylella fastidiosa (strain M12).